The following is a 202-amino-acid chain: Outer-membrane lipoprotein carrier protein (202 aa).

The signal sequence occupies residues methionine 1 to serine 18.

The protein belongs to the LolA family. Monomer.

The protein localises to the periplasm. In terms of biological role, participates in the translocation of lipoproteins from the inner membrane to the outer membrane. Only forms a complex with a lipoprotein if the residue after the N-terminal Cys is not an aspartate (The Asp acts as a targeting signal to indicate that the lipoprotein should stay in the inner membrane). The sequence is that of Outer-membrane lipoprotein carrier protein from Legionella pneumophila (strain Paris).